The chain runs to 225 residues: Small ribosomal subunit protein uS3 (225 aa).

The KH type-2 domain occupies 39 to 109 (IYRFFNKFTR…ELKLNIEVVN (71 aa)).

It belongs to the universal ribosomal protein uS3 family. As to quaternary structure, part of the 30S ribosomal subunit. Forms a tight complex with proteins S10 and S14.

In terms of biological role, binds the lower part of the 30S subunit head. Binds mRNA in the 70S ribosome, positioning it for translation. In Mycoplasma mobile (strain ATCC 43663 / 163K / NCTC 11711) (Mesomycoplasma mobile), this protein is Small ribosomal subunit protein uS3.